The sequence spans 179 residues: MSRIGKKPISLPAGVEVSIKDNAISVKGPKGVLEWALPEGITVVQEGNELVVKRPSDIKQHRAMHGLSRALIANMVQGVSAGFEKKLELVGVGYRAQMQGKKLVISIGFSHPVEVEPPEGIEFEVPAVTRITVKGIDKQLVGNTAAHIRAIRKPEPYKGKGIKYENEVIRRKAGKAGGK.

It belongs to the universal ribosomal protein uL6 family. Part of the 50S ribosomal subunit.

This protein binds to the 23S rRNA, and is important in its secondary structure. It is located near the subunit interface in the base of the L7/L12 stalk, and near the tRNA binding site of the peptidyltransferase center. This Syntrophomonas wolfei subsp. wolfei (strain DSM 2245B / Goettingen) protein is Large ribosomal subunit protein uL6.